A 176-amino-acid chain; its full sequence is R-phycoerythrin beta chain (176 aa).

Positions 50 and 61 each coordinate phycourobilin. Position 72 is an N4-methylasparagine (Asn72). The (2R,3E)-phycoerythrobilin site is built by Cys82 and Cys158.

The protein belongs to the phycobiliprotein family. Heterodimer of an alpha and a beta chain. Contains two covalently linked phycoerythrobilin chromophores and one covalently linked phycourobilin chromophore.

The protein localises to the plastid. The protein resides in the chloroplast thylakoid membrane. In terms of biological role, light-harvesting photosynthetic bile pigment-protein from the phycobiliprotein complex. The protein is R-phycoerythrin beta chain (cpeB) of Aglaothamnion neglectum (Red alga).